An 822-amino-acid polypeptide reads, in one-letter code: Fibroblast growth factor receptor 4 (822 aa).

The signal sequence occupies residues 1 to 35 (MGVQKDSRDIRWNRTTRPLALLLCGLLAFSALSCA). N13, N72, and N125 each carry an N-linked (GlcNAc...) asparagine glycan. At 36-388 (RTLPEGRKAN…AEGPETRYTD (353 aa)) the chain is on the extracellular side. Ig-like C2-type domains lie at 39 to 129 (PEGR…FTIS), 157 to 259 (PPYS…YLLD), and 268 to 368 (PILQ…AWLT). C69 and C114 are oxidised to a cystine. The tract at residues 136 to 166 (SGDDDDEDHGREDSAGDMGEDPPYSTSYRAP) is disordered. The cysteines at positions 191 and 243 are disulfide-linked. 5 N-linked (GlcNAc...) asparagine glycosylation sites follow: N240, N277, N309, N330, and N341. A disulfide bond links C290 and C352. The helical transmembrane segment at 389-409 (IIIYTSGSLALLMAAVIVVLC) threads the bilayer. The Cytoplasmic portion of the chain corresponds to 410–822 (RMQLPPTKTH…HHTTTSMVGT (413 aa)). Positions 486 to 774 (LVLGKPLGEG…ILATVAEEYL (289 aa)) constitute a Protein kinase domain. ATP-binding positions include 492 to 500 (LGEGCFGQV) and K522. The Proton acceptor role is filled by D631. Phosphotyrosine; by autocatalysis is present on residues Y661, Y662, and Y773.

Belongs to the protein kinase superfamily. Tyr protein kinase family. Fibroblast growth factor receptor subfamily. Post-translationally, ubiquitinated. Subject to proteasomal degradation when not fully glycosylated. Autophosphorylated. Binding of FGF family members together with heparan sulfate proteoglycan or heparin promotes receptor dimerization and autophosphorylation on tyrosine residues. Autophosphorylation occurs in trans between the two FGFR molecules present in the dimer.

It localises to the cell membrane. Its subcellular location is the endosome. The protein localises to the endoplasmic reticulum. It catalyses the reaction L-tyrosyl-[protein] + ATP = O-phospho-L-tyrosyl-[protein] + ADP + H(+). With respect to regulation, present in an inactive conformation in the absence of bound ligand. Ligand binding leads to dimerization and activation by autophosphorylation on tyrosine residues. Its function is as follows. Tyrosine-protein kinase that acts as a cell-surface receptor for fibroblast growth factors and plays a role in the regulation of cell proliferation, differentiation and migration, and in regulation of lipid metabolism, bile acid biosynthesis, glucose uptake, vitamin D metabolism and phosphate homeostasis. Required for normal down-regulation of the expression of CYP7A1, the rate-limiting enzyme in bile acid synthesis, in response to FGF19. Phosphorylates PLCG1 and FRS2. Ligand binding leads to the activation of several signaling cascades. Activation of PLCG1 leads to the production of the cellular signaling molecules diacylglycerol and inositol 1,4,5-trisphosphate. Phosphorylation of FRS2 triggers recruitment of GRB2, GAB1, PIK3R1 and SOS1, and mediates activation of RAS, MAPK1/ERK2, MAPK3/ERK1 and the MAP kinase signaling pathway, as well as of the AKT1 signaling pathway. The protein is Fibroblast growth factor receptor 4 (FGFR4) of Pleurodeles waltl (Iberian ribbed newt).